We begin with the raw amino-acid sequence, 213 residues long: RPW8-like protein 3 (213 aa).

Positions 1 to 153 (MPVSEIMAGA…ITRQPTDCIC (153 aa)) constitute an RPW8 domain. A helical membrane pass occupies residues 7–23 (MAGAALGLALQVLHDAI). Coiled-coil stretches lie at residues 70 to 93 (EDLK…RRRN) and 125 to 147 (VDIK…ITRQ). Asn157 carries N-linked (GlcNAc...) asparagine glycosylation.

The protein belongs to the plant RPW8 protein family.

The protein localises to the membrane. Its function is as follows. Probable disease resistance (R) protein. The chain is RPW8-like protein 3 from Arabidopsis thaliana (Mouse-ear cress).